A 460-amino-acid chain; its full sequence is A-type ATP synthase subunit B (460 aa).

This sequence belongs to the ATPase alpha/beta chains family. As to quaternary structure, has multiple subunits with at least A(3), B(3), C, D, E, F, H, I and proteolipid K(x).

Its subcellular location is the cell membrane. Its function is as follows. Component of the A-type ATP synthase that produces ATP from ADP in the presence of a proton gradient across the membrane. The B chain is a regulatory subunit. In Thermoplasma volcanium (strain ATCC 51530 / DSM 4299 / JCM 9571 / NBRC 15438 / GSS1), this protein is A-type ATP synthase subunit B.